The primary structure comprises 126 residues: Glycine cleavage system H protein (126 aa).

Positions T23–K104 constitute a Lipoyl-binding domain. K64 is modified (N6-lipoyllysine).

It belongs to the GcvH family. In terms of assembly, the glycine cleavage system is composed of four proteins: P, T, L and H. The cofactor is (R)-lipoate.

In terms of biological role, the glycine cleavage system catalyzes the degradation of glycine. The H protein shuttles the methylamine group of glycine from the P protein to the T protein. The sequence is that of Glycine cleavage system H protein from Paraburkholderia phytofirmans (strain DSM 17436 / LMG 22146 / PsJN) (Burkholderia phytofirmans).